The chain runs to 95 residues: Aspartyl/glutamyl-tRNA(Asn/Gln) amidotransferase subunit C (95 aa).

Belongs to the GatC family. Heterotrimer of A, B and C subunits.

The enzyme catalyses L-glutamyl-tRNA(Gln) + L-glutamine + ATP + H2O = L-glutaminyl-tRNA(Gln) + L-glutamate + ADP + phosphate + H(+). The catalysed reaction is L-aspartyl-tRNA(Asn) + L-glutamine + ATP + H2O = L-asparaginyl-tRNA(Asn) + L-glutamate + ADP + phosphate + 2 H(+). Functionally, allows the formation of correctly charged Asn-tRNA(Asn) or Gln-tRNA(Gln) through the transamidation of misacylated Asp-tRNA(Asn) or Glu-tRNA(Gln) in organisms which lack either or both of asparaginyl-tRNA or glutaminyl-tRNA synthetases. The reaction takes place in the presence of glutamine and ATP through an activated phospho-Asp-tRNA(Asn) or phospho-Glu-tRNA(Gln). The protein is Aspartyl/glutamyl-tRNA(Asn/Gln) amidotransferase subunit C of Clostridium botulinum (strain ATCC 19397 / Type A).